A 434-amino-acid polypeptide reads, in one-letter code: Alpha-enolase (434 aa).

Residue serine 40 coordinates Mg(2+). Positions 158 and 167 each coordinate substrate. Residue glutamate 210 is the Proton donor of the active site. 3 residues coordinate Mg(2+): aspartate 245, glutamate 293, and aspartate 318. Substrate-binding residues include glutamate 293 and aspartate 318. The Proton acceptor role is filled by lysine 343. Residues 370-373 and lysine 394 each bind substrate; that span reads SHRS.

It belongs to the enolase family. In terms of assembly, homodimer. It depends on Mg(2+) as a cofactor.

It localises to the cytoplasm. The enzyme catalyses (2R)-2-phosphoglycerate = phosphoenolpyruvate + H2O. Its pathway is carbohydrate degradation; glycolysis; pyruvate from D-glyceraldehyde 3-phosphate: step 4/5. The sequence is that of Alpha-enolase (ENO1) from Gallus gallus (Chicken).